The chain runs to 340 residues: MKEQLEQLQVEALEEIKQASTQKSLNDVRIKYLGKKGPMTEVLRGMGKLSAEERPIIGELANTVRTAIQSTLDARIEEVKAIELEEKLKAETLDVTLPGRTSTPGHSHLLQQIIDEMEDLFVGLGYTIAEGPEVETDLYNFEMLNLPKDHPARDMQDSFYITEETLLRTHTSPVQARTMLEANGKPIRIICPGKVYRRDEDDATHSHQFMQIEGLVVDESISMADLKGTLEVFVKQLFGETREIRLRPSFFPFTEPSVEVDISCFKCGGKGCNVCKGTGWIEILGGGMVHPHVLEMAGYDSSKVSGFAFGIGVERMAMLKHGVDDIRHFYTNDLRFIEQF.

Position 255 (Glu255) interacts with Mg(2+).

Belongs to the class-II aminoacyl-tRNA synthetase family. Phe-tRNA synthetase alpha subunit type 1 subfamily. In terms of assembly, tetramer of two alpha and two beta subunits. The cofactor is Mg(2+).

It localises to the cytoplasm. It catalyses the reaction tRNA(Phe) + L-phenylalanine + ATP = L-phenylalanyl-tRNA(Phe) + AMP + diphosphate + H(+). This chain is Phenylalanine--tRNA ligase alpha subunit, found in Exiguobacterium sp. (strain ATCC BAA-1283 / AT1b).